The following is a 207-amino-acid chain: MQIGLDFNLVEDLVAGVDEVGRGPLCGAVVTAAVILDPARPILGLNDSKKLTEAKREALFDEICEKALSFCIARAEVEEIDRLNILQATMLAMQRAVEGLHITPKLALIDGNRCPKLAVPASPVVKGDSQVPAIAAASILAKVTRDREMSAFELIYPGYGIGGHKGYPTPVHLEALARLGPTPIHRRSFAPVRAAWEAREGVTDSLI.

One can recognise an RNase H type-2 domain in the interval 12–201 (DLVAGVDEVG…VRAAWEAREG (190 aa)). The a divalent metal cation site is built by aspartate 18, glutamate 19, and aspartate 110.

Belongs to the RNase HII family. It depends on Mn(2+) as a cofactor. Mg(2+) is required as a cofactor.

The protein resides in the cytoplasm. The enzyme catalyses Endonucleolytic cleavage to 5'-phosphomonoester.. In terms of biological role, endonuclease that specifically degrades the RNA of RNA-DNA hybrids. The polypeptide is Ribonuclease HII (Pseudomonas putida (strain GB-1)).